The primary structure comprises 804 residues: ATP-dependent RNA helicase dbp4 (804 aa).

Residues 1–24 (MAPANAPRNGKYAKSSQRTLKRKR) are disordered. Positions 46 to 74 (KAFTDLPLSEPTLSGLSASHYKTLTDIQS) match the Q motif motif. The Helicase ATP-binding domain occupies 77–251 (VSHALKGRDI…RLSLQDPEYV (175 aa)). 90–97 (AKTGSGKT) serves as a coordination point for ATP. The DEAD box motif lies at 199 to 202 (DEAD). The Helicase C-terminal domain occupies 277–436 (KLDILWSFIR…SIKNQLQNMC (160 aa)). 3 disordered regions span residues 493 to 541 (GDDT…DRMF), 589 to 615 (DKQL…KDVK), and 695 to 804 (LADV…GLLG). The segment covering 521-541 (DEKKSKKKDAPQVRTKYDRMF) has biased composition (basic and acidic residues). The span at 695–705 (LADVEDKELVK) shows a compositional bias: basic and acidic residues. Positions 706–715 (QKRREKKEKR) are enriched in basic residues.

This sequence belongs to the DEAD box helicase family. DDX10/DBP4 subfamily. Interacts with the U3 and U14 snoRNAs. Associates with pre-ribosomal complexes.

Its subcellular location is the nucleus. The protein resides in the nucleolus. The catalysed reaction is ATP + H2O = ADP + phosphate + H(+). Its function is as follows. ATP-dependent RNA helicase required for ribosome biogenesis. Involved in the release of U14 snoRNA in pre-ribosomal complexes. Required for pre-rRNA cleavage at site A2. The polypeptide is ATP-dependent RNA helicase dbp4 (dbp4) (Aspergillus terreus (strain NIH 2624 / FGSC A1156)).